Consider the following 317-residue polypeptide: Melanocyte-stimulating hormone receptor (317 aa).

Residues 1–37 are Extracellular-facing; it reads MPVQGSQRRLLGSLNSTPTATPHLGLAANQTGAWCLE. N-linked (GlcNAc...) asparagine glycosylation occurs at Asn29. A helical transmembrane segment spans residues 38-63; the sequence is VSIPDGLFLSLGLVSLVENVLVVTAI. Topologically, residues 64 to 72 are cytoplasmic; sequence AKNRNLHSP. A helical membrane pass occupies residues 73 to 93; it reads MYCFICCLALSDLLVSGSNML. At 94-118 the chain is on the extracellular side; the sequence is ETAVTLLLEAGALAARAAVVQQLDN. A helical membrane pass occupies residues 119 to 140; the sequence is VIDVITCSSMLSSLCFLGAIAV. Over 141–163 the chain is Cytoplasmic; that stretch reads DRYISIFYALRYHSIVTLPRARR. Residues 164–183 traverse the membrane as a helical segment; sequence AVAAIWVASVLFSMLFIAYY. Topologically, residues 184–191 are extracellular; that stretch reads DHAAVLLC. A helical transmembrane segment spans residues 192 to 211; it reads LVVFFLAMLVLMAVLYVHML. Over 212–240 the chain is Cytoplasmic; sequence ARACQHAQGIARLHKRQRPAHQGFGLKGA. Residues 241 to 266 form a helical membrane-spanning segment; the sequence is ATLTILLGIFFLCWGPFFLHLTLIVL. The Extracellular segment spans residues 267–279; that stretch reads CPQHPTCSCIFKN. Residues 280–300 traverse the membrane as a helical segment; it reads FNLFLALIICNAIIDPLIYAF. The Cytoplasmic portion of the chain corresponds to 301 to 317; sequence RSQELRRTLKEVLLCSW. A lipid anchor (S-palmitoyl cysteine) is attached at Cys315.

The protein belongs to the G-protein coupled receptor 1 family. As to quaternary structure, interacts with MGRN1, but does not undergo MGRN1-mediated ubiquitination; this interaction competes with GNAS-binding and thus inhibits agonist-induced cAMP production. Interacts with OPN3; the interaction results in a decrease in MC1R-mediated cAMP signaling and ultimately a decrease in melanin production in melanocytes.

The protein localises to the cell membrane. Functionally, receptor for MSH (alpha, beta and gamma) and ACTH. The activity of this receptor is mediated by G proteins which activate adenylate cyclase. Mediates melanogenesis, the production of eumelanin (black/brown) and phaeomelanin (red/yellow), via regulation of cAMP signaling in melanocytes. The chain is Melanocyte-stimulating hormone receptor (MC1R) from Allenopithecus nigroviridis (Allen's swamp monkey).